The primary structure comprises 101 residues: DNA-binding protein Fis (101 aa).

Positions 77–96 (QTRAANMLGINRGTLRKKLK) form a DNA-binding region, H-T-H motif.

It belongs to the transcriptional regulatory Fis family. Homodimer.

Its function is as follows. Activates ribosomal RNA transcription. Plays a direct role in upstream activation of rRNA promoters. In Shewanella amazonensis (strain ATCC BAA-1098 / SB2B), this protein is DNA-binding protein Fis.